The following is a 289-amino-acid chain: D-alanine aminotransferase (289 aa).

Tyrosine 31 contributes to the substrate binding site. Arginine 50 contacts pyridoxal 5'-phosphate. 2 residues coordinate substrate: arginine 99 and histidine 101. Lysine 147 (proton acceptor) is an active-site residue. Lysine 147 carries the N6-(pyridoxal phosphate)lysine modification. Glutamate 179 is a binding site for pyridoxal 5'-phosphate.

The protein belongs to the class-IV pyridoxal-phosphate-dependent aminotransferase family. In terms of assembly, homodimer. It depends on pyridoxal 5'-phosphate as a cofactor.

The enzyme catalyses D-alanine + 2-oxoglutarate = D-glutamate + pyruvate. Functionally, acts on the D-isomers of alanine, leucine, aspartate, glutamate, aminobutyrate, norvaline and asparagine. The enzyme transfers an amino group from a substrate D-amino acid to the pyridoxal phosphate cofactor to form pyridoxamine and an alpha-keto acid in the first half-reaction. The second half-reaction is the reverse of the first, transferring the amino group from the pyridoxamine to a second alpha-keto acid to form the product D-amino acid via a ping-pong mechanism. This is an important process in the formation of D-alanine and D-glutamate, which are essential bacterial cell wall components. The protein is D-alanine aminotransferase (dat) of Listeria innocua serovar 6a (strain ATCC BAA-680 / CLIP 11262).